The following is a 375-amino-acid chain: Nucleolysin TIAR (375 aa).

2 consecutive RRM domains span residues 9 to 85 and 97 to 175; these read RTLY…WATT and FHVF…WATR. At K122 the chain carries N6-acetyllysine. S201 carries the phosphoserine modification. The RRM 3 domain maps to 205 to 277; it reads CTVYCGGIAS…HVVKCYWGKE (73 aa). Residues 345-375 are disordered; that stretch reads FGAQPPQGQAPPPVIPPPNQAGYGMASYQTQ. The span at 352–363 shows a compositional bias: pro residues; it reads GQAPPPVIPPPN.

In terms of assembly, interacts with FASTK. Phosphorylated by MAPK14 following DNA damage, releasing TIAR from GADD45A mRNA. As to expression, expressed in brain, heart, kidney, lung and skeletal muscle.

It is found in the nucleus. Its subcellular location is the cytoplasm. It localises to the cytolytic granule. The protein localises to the stress granule. Its function is as follows. RNA-binding protein involved in alternative pre-RNA splicing and in cytoplasmic stress granules formation. Shows a preference for uridine-rich RNAs. Activates splicing of alternative exons with weak 5' splice sites followed by a U-rich stretch on its own pre-mRNA and on TIA1 mRNA. Promotes the inclusion of TIA1 exon 5 to give rise to the long isoform (isoform a) of TIA1. Acts downstream of the stress-induced phosphorylation of EIF2S1/EIF2A to promote the recruitment of untranslated mRNAs to cytoplasmic stress granules (SG). Possesses nucleolytic activity against cytotoxic lymphocyte target cells. May be involved in apoptosis. This is Nucleolysin TIAR (TIAL1) from Homo sapiens (Human).